Reading from the N-terminus, the 216-residue chain is Large ribosomal subunit protein uL3 (216 aa).

A disordered region spans residues 137-158 (GASHGAHKNHRKPGSIGGASTP).

This sequence belongs to the universal ribosomal protein uL3 family. In terms of assembly, part of the 50S ribosomal subunit. Forms a cluster with proteins L14 and L19.

One of the primary rRNA binding proteins, it binds directly near the 3'-end of the 23S rRNA, where it nucleates assembly of the 50S subunit. The sequence is that of Large ribosomal subunit protein uL3 from Pseudarthrobacter chlorophenolicus (strain ATCC 700700 / DSM 12829 / CIP 107037 / JCM 12360 / KCTC 9906 / NCIMB 13794 / A6) (Arthrobacter chlorophenolicus).